A 181-amino-acid chain; its full sequence is TATA-box-binding protein (181 aa).

2 repeat units span residues 7 to 83 (IVNV…IKEL) and 98 to 173 (VQNM…SKTL).

This sequence belongs to the TBP family.

General factor that plays a role in the activation of archaeal genes transcribed by RNA polymerase. Binds specifically to the TATA box promoter element which lies close to the position of transcription initiation. This is TATA-box-binding protein from Methanococcus maripaludis (strain C6 / ATCC BAA-1332).